Reading from the N-terminus, the 286-residue chain is Probable endonuclease 4 (286 aa).

Zn(2+)-binding residues include His-67, His-107, Glu-144, Asp-178, His-181, His-215, Asp-228, His-230, and Glu-260.

Belongs to the AP endonuclease 2 family. It depends on Zn(2+) as a cofactor.

It carries out the reaction Endonucleolytic cleavage to 5'-phosphooligonucleotide end-products.. Functionally, endonuclease IV plays a role in DNA repair. It cleaves phosphodiester bonds at apurinic or apyrimidinic (AP) sites, generating a 3'-hydroxyl group and a 5'-terminal sugar phosphate. This chain is Probable endonuclease 4, found in Chloroflexus aggregans (strain MD-66 / DSM 9485).